The sequence spans 355 residues: MLISKLTPFIERFEEITRLLGTMEVISDIKRMTELSKEQSALEALVLKAKEYLQTHRSIQENRALFEDKELGDLAKEENKLLEESLESLESEIKLLLIPKDPNDDKNIYLEIRAGTGGDEAGIFVGDLFKSYCRYADLKGWKVEIISSSENSVGGYKEVIALIKGNGVYSRLKYEGGTHRVQRVPETESQGRIHTSAITVAIMPEVDDVEVNINPNDLKIDVFRSGGHGGQSVNTTDSAVRITHLPTGISVSMQDEKSQHKNKDKALKILKARLYEAELEAKLSENSAARKLQVGSGDRSERIRTYNYPQNRLTDHRIGLTLYSLEEIMLSGNFDQVVDPIVAHYQAEMMKESED.

Glutamine 231 is modified (N5-methylglutamine).

This sequence belongs to the prokaryotic/mitochondrial release factor family. Post-translationally, methylated by PrmC. Methylation increases the termination efficiency of RF1.

The protein resides in the cytoplasm. Its function is as follows. Peptide chain release factor 1 directs the termination of translation in response to the peptide chain termination codons UAG and UAA. The sequence is that of Peptide chain release factor 1 from Wolinella succinogenes (strain ATCC 29543 / DSM 1740 / CCUG 13145 / JCM 31913 / LMG 7466 / NCTC 11488 / FDC 602W) (Vibrio succinogenes).